Reading from the N-terminus, the 486-residue chain is Galactose-1-phosphate uridylyltransferase (486 aa).

This sequence belongs to the galactose-1-phosphate uridylyltransferase type 2 family.

The protein localises to the cytoplasm. The catalysed reaction is alpha-D-galactose 1-phosphate + UDP-alpha-D-glucose = alpha-D-glucose 1-phosphate + UDP-alpha-D-galactose. Its pathway is carbohydrate metabolism; galactose metabolism. This Lacticaseibacillus paracasei (strain ATCC 334 / BCRC 17002 / CCUG 31169 / CIP 107868 / KCTC 3260 / NRRL B-441) (Lactobacillus paracasei) protein is Galactose-1-phosphate uridylyltransferase.